The sequence spans 896 residues: Alanine--tRNA ligase (896 aa).

4 residues coordinate Zn(2+): His-581, His-585, Cys-684, and His-688.

Belongs to the class-II aminoacyl-tRNA synthetase family. Zn(2+) serves as cofactor.

Its subcellular location is the cytoplasm. The catalysed reaction is tRNA(Ala) + L-alanine + ATP = L-alanyl-tRNA(Ala) + AMP + diphosphate. Functionally, catalyzes the attachment of alanine to tRNA(Ala) in a two-step reaction: alanine is first activated by ATP to form Ala-AMP and then transferred to the acceptor end of tRNA(Ala). Also edits incorrectly charged Ser-tRNA(Ala) and Gly-tRNA(Ala) via its editing domain. This is Alanine--tRNA ligase from Renibacterium salmoninarum (strain ATCC 33209 / DSM 20767 / JCM 11484 / NBRC 15589 / NCIMB 2235).